A 433-amino-acid polypeptide reads, in one-letter code: GTPase Der (433 aa).

EngA-type G domains lie at 5–167 (KKVL…GEVG) and 174–349 (IKVG…DQLE). GTP contacts are provided by residues 11 to 18 (GRPNVGKS), 58 to 62 (DTGGF), 119 to 122 (NKVD), 180 to 187 (GKPNSGKS), 227 to 231 (DTAGI), and 292 to 295 (SKWD). The KH-like domain occupies 349 to 429 (ELKTSTPDLN…PILVELKEKI (81 aa)).

It belongs to the TRAFAC class TrmE-Era-EngA-EngB-Septin-like GTPase superfamily. EngA (Der) GTPase family. As to quaternary structure, associates with the 50S ribosomal subunit.

Functionally, GTPase that plays an essential role in the late steps of ribosome biogenesis. The protein is GTPase Der of Borreliella burgdorferi (strain ATCC 35210 / DSM 4680 / CIP 102532 / B31) (Borrelia burgdorferi).